A 354-amino-acid polypeptide reads, in one-letter code: Uroporphyrinogen decarboxylase (354 aa).

Residues 27-31 (RQAGR), Asp-77, Tyr-154, Thr-209, and His-327 each bind substrate.

Belongs to the uroporphyrinogen decarboxylase family. In terms of assembly, homodimer.

Its subcellular location is the cytoplasm. It catalyses the reaction uroporphyrinogen III + 4 H(+) = coproporphyrinogen III + 4 CO2. The protein operates within porphyrin-containing compound metabolism; protoporphyrin-IX biosynthesis; coproporphyrinogen-III from 5-aminolevulinate: step 4/4. Functionally, catalyzes the decarboxylation of four acetate groups of uroporphyrinogen-III to yield coproporphyrinogen-III. The chain is Uroporphyrinogen decarboxylase from Edwardsiella ictaluri (strain 93-146).